A 141-amino-acid polypeptide reads, in one-letter code: ATP synthase epsilon chain (141 aa).

It belongs to the ATPase epsilon chain family. In terms of assembly, F-type ATPases have 2 components, CF(1) - the catalytic core - and CF(0) - the membrane proton channel. CF(1) has five subunits: alpha(3), beta(3), gamma(1), delta(1), epsilon(1). CF(0) has three main subunits: a, b and c.

It is found in the cell inner membrane. Produces ATP from ADP in the presence of a proton gradient across the membrane. The chain is ATP synthase epsilon chain from Burkholderia multivorans (strain ATCC 17616 / 249).